The primary structure comprises 59 residues: Large ribosomal subunit protein uL30 (59 aa).

This sequence belongs to the universal ribosomal protein uL30 family. As to quaternary structure, part of the 50S ribosomal subunit.

The protein is Large ribosomal subunit protein uL30 of Photobacterium profundum (strain SS9).